The following is a 616-amino-acid chain: Hemagglutinin-neuraminidase (616 aa).

The Intravirion segment spans residues Met1 to Arg26. The helical transmembrane segment at Ile27–Ser47 threads the bilayer. At Met48–Pro616 the chain is on the virion surface side. A glycan (N-linked (GlcNAc...) asparagine; by host) is linked at Asn119. The interval Gly124–Tyr152 is important for interaction with fusion/F protein. Intrachain disulfides connect Cys172-Cys196, Cys186-Cys247, and Cys238-Cys251. The involved in neuraminidase activity stretch occupies residues Asn234–Ser239. 2 N-linked (GlcNAc...) asparagine; by host glycosylation sites follow: Asn341 and Asn433. Intrachain disulfides connect Cys344-Cys461 and Cys455-Cys465. Residues Asn481, Asn538, and Asn600 are each glycosylated (N-linked (GlcNAc...) asparagine; by host). A disulfide bridge links Cys531 with Cys542.

This sequence belongs to the paramyxoviruses hemagglutinin-neuraminidase family. Homotetramer; composed of disulfide-linked homodimers. Interacts with F protein trimer. Interacts with host CG-1B; this interaction inhibits viral adsorption and replication rather than internalization.

It is found in the virion membrane. It localises to the host cell membrane. It carries out the reaction Hydrolysis of alpha-(2-&gt;3)-, alpha-(2-&gt;6)-, alpha-(2-&gt;8)- glycosidic linkages of terminal sialic acid residues in oligosaccharides, glycoproteins, glycolipids, colominic acid and synthetic substrates.. Its function is as follows. Mediates the viral entry into the host cell together with fusion/F protein. Attaches the virus to sialic acid-containing cell receptors and thereby initiates infection. Binding of HN protein to the receptor induces a conformational change that allows the F protein to trigger virion/cell membranes fusion. Functionally, neuraminidase activity ensures the efficient spread of the virus by dissociating the mature virions from the neuraminic acid containing glycoproteins. In Newcastle disease virus (strain Chicken/Northern Ireland/Ulster/67) (NDV), this protein is Hemagglutinin-neuraminidase (HN).